A 281-amino-acid chain; its full sequence is Putrescine transport system permease protein PotI (281 aa).

Topologically, residues 1–13 (MNNLPVVRSPWRI) are cytoplasmic. The helical transmembrane segment at 14–33 (VILLLGFTFLYAPMLMLVIY) threads the bilayer. Residues 34–68 (SFNSSKLVTVWAGWSTRWYGELLRDDAMMSAVGLS) are Periplasmic-facing. An ABC transmembrane type-1 domain is found at 65-260 (VGLSLTIAAC…GAVGIVGFIA (196 aa)). A helical membrane pass occupies residues 69-88 (LTIAACAATAAAILGTIAAV). At 89–115 (VLVRFGRFRGSNGFAFMITAPLVMPDV) the chain is on the cytoplasmic side. The helical transmembrane segment at 116–135 (ITGLSLLLLFVALAHAIGWP) threads the bilayer. Over 136–140 (ADRGM) the chain is Periplasmic. A helical transmembrane segment spans residues 141–160 (LTIWLAHVTFCTAYVAVVIS). Over 161–186 (SRLRELDRSIEEAAMDLGATPLKVFF) the chain is Cytoplasmic. A helical membrane pass occupies residues 187–206 (VITLPMIMPAIISGWLLAFT). Topologically, residues 207–243 (LSLDDLVIASFVSGPGATTLPMLVFSSVRMGVNPEIN) are periplasmic. Residues 244-263 (ALATLILGAVGIVGFIAWYL) traverse the membrane as a helical segment. The Cytoplasmic portion of the chain corresponds to 264–281 (MARAEKQRIRDIQRARRG).

It belongs to the binding-protein-dependent transport system permease family. CysTW subfamily. In terms of assembly, the complex is composed of two ATP-binding proteins (PotG), two transmembrane proteins (PotH and PotI) and a solute-binding protein (PotF).

It localises to the cell inner membrane. Its function is as follows. Part of the ABC transporter complex PotFGHI involved in putrescine uptake. Responsible for the translocation of the substrate across the membrane. The protein is Putrescine transport system permease protein PotI of Escherichia coli O6:H1 (strain CFT073 / ATCC 700928 / UPEC).